Here is a 472-residue protein sequence, read N- to C-terminus: MNKTTSSHSPIHVIGGGLAGSEAAWQIAEAGVPVILHEMRGVRGTDAHKTESLAELVCSNSFRSDDATSNAVGVLHAEMRLAGSLIMRCADLNQVPAGGALAVDREGFAEAVSAAIADHPLITVLREEIRGLPPKDWDLAIIATGPLTAPDLAEAIRAETGADALAFFDAIAPIVHADTIDMDICWHQSRYDKVGPGGTGKDYINCPLTQEQYDAFVDALIAGDKAGFKEWEGTPYFDGCLPIEVMAERGRETLRHGPMKPMGLTNAHNPSVKPYAVVQLRQDNALGTLYNMVGFQTKLKYGAQGEVFRMIPGLQNAEFARLGGLHRNTYINSPTLLDHSLTLKSRPGLRFAGQITGCEGYVESASIGLLAGRFAAAERKGVSPVLPPVTTAFGALLDHITGGHIVSDDEPGKRSFQPMNINFGLFPPLEPGALTRPEGAKRFRGKEKALAKKQAMASRALSDCASWLDQAV.

15–20 (GGGLAG) is an FAD binding site.

It belongs to the MnmG family. TrmFO subfamily. FAD serves as cofactor.

It is found in the cytoplasm. The catalysed reaction is uridine(54) in tRNA + (6R)-5,10-methylene-5,6,7,8-tetrahydrofolate + NADH + H(+) = 5-methyluridine(54) in tRNA + (6S)-5,6,7,8-tetrahydrofolate + NAD(+). The enzyme catalyses uridine(54) in tRNA + (6R)-5,10-methylene-5,6,7,8-tetrahydrofolate + NADPH + H(+) = 5-methyluridine(54) in tRNA + (6S)-5,6,7,8-tetrahydrofolate + NADP(+). Functionally, catalyzes the folate-dependent formation of 5-methyl-uridine at position 54 (M-5-U54) in all tRNAs. The sequence is that of Methylenetetrahydrofolate--tRNA-(uracil-5-)-methyltransferase TrmFO from Rhizobium meliloti (strain 1021) (Ensifer meliloti).